The sequence spans 352 residues: UPF0252 protein MJ1282 (352 aa).

It belongs to the UPF0252 family.

This Methanocaldococcus jannaschii (strain ATCC 43067 / DSM 2661 / JAL-1 / JCM 10045 / NBRC 100440) (Methanococcus jannaschii) protein is UPF0252 protein MJ1282.